Consider the following 379-residue polypeptide: MTSQDRSEAVLVLADGRIFKGESFGAEGATLGEAVFTTAMSGYQETMTDPSYHRQIVVATAPQIGNTGWNDEDGESHGDKIWVAGLVIRDLSTAVSNWRAKRSLEDEMREQNIVGISGVDTRAIVRHLRNFGSVAAGIFSGEAAKQPHDELIEIVKSQPSMAGADLASEVSTQEAYVVEPDGEALYTVVAYDMGIKTNTPRNFSRRGIRTVVVPANTPAEDIAQYNPDGVFVSNGPGDPATADVMVGIVQEILAQKIPFFGICFGNQILGRALGMNTYKMKFGHRGINVPVLNHLTGKIDITAQNHGFALEGTALEQFDTPFGPAHVTHTCLNDDTVEGVALVNGLAYSVQYHPEAAAGPHDANPLFDQFVELIQANKK.

Residues 1-183 form a CPSase region; sequence MTSQDRSEAV…EAYVVEPDGE (183 aa). The L-glutamine site is built by S51, G235, and G237. The 195-residue stretch at 185–379 folds into the Glutamine amidotransferase type-1 domain; it reads LYTVVAYDMG…FVELIQANKK (195 aa). The active-site Nucleophile is the C263. Residues F264, Q267, N305, G307, and F308 each coordinate L-glutamine. Residues H353 and E355 contribute to the active site.

This sequence belongs to the CarA family. In terms of assembly, composed of two chains; the small (or glutamine) chain promotes the hydrolysis of glutamine to ammonia, which is used by the large (or ammonia) chain to synthesize carbamoyl phosphate. Tetramer of heterodimers (alpha,beta)4.

The catalysed reaction is hydrogencarbonate + L-glutamine + 2 ATP + H2O = carbamoyl phosphate + L-glutamate + 2 ADP + phosphate + 2 H(+). It catalyses the reaction L-glutamine + H2O = L-glutamate + NH4(+). The protein operates within amino-acid biosynthesis; L-arginine biosynthesis; carbamoyl phosphate from bicarbonate: step 1/1. It participates in pyrimidine metabolism; UMP biosynthesis via de novo pathway; (S)-dihydroorotate from bicarbonate: step 1/3. Functionally, small subunit of the glutamine-dependent carbamoyl phosphate synthetase (CPSase). CPSase catalyzes the formation of carbamoyl phosphate from the ammonia moiety of glutamine, carbonate, and phosphate donated by ATP, constituting the first step of 2 biosynthetic pathways, one leading to arginine and/or urea and the other to pyrimidine nucleotides. The small subunit (glutamine amidotransferase) binds and cleaves glutamine to supply the large subunit with the substrate ammonia. In Corynebacterium diphtheriae (strain ATCC 700971 / NCTC 13129 / Biotype gravis), this protein is Carbamoyl phosphate synthase small chain.